The sequence spans 124 residues: Ribonuclease pancreatic A (124 aa).

A disordered region spans residues 1–24 (AESSAMKFERQHVDSGGSSSSNAN). The substrate site is built by Lys-7 and Arg-10. His-12 functions as the Proton acceptor in the catalytic mechanism. Cystine bridges form between Cys-26/Cys-84, Cys-40/Cys-95, Cys-58/Cys-110, and Cys-65/Cys-72. Residues 41 to 45 (KPVNT), Lys-66, and Arg-85 each bind substrate. His-119 functions as the Proton donor in the catalytic mechanism.

The protein belongs to the pancreatic ribonuclease family. In terms of tissue distribution, pancreas.

It is found in the secreted. The enzyme catalyses an [RNA] containing cytidine + H2O = an [RNA]-3'-cytidine-3'-phosphate + a 5'-hydroxy-ribonucleotide-3'-[RNA].. The catalysed reaction is an [RNA] containing uridine + H2O = an [RNA]-3'-uridine-3'-phosphate + a 5'-hydroxy-ribonucleotide-3'-[RNA].. The chain is Ribonuclease pancreatic A from Cavia porcellus (Guinea pig).